The primary structure comprises 591 residues: Speriolin (591 aa).

A coiled-coil region spans residues 1-42 (MSLLTNYEGLRHQIERLVRENEELKKLVRLIRENHELKSAIK). A necessary for targeting centrosomes region spans residues 1–78 (MSLLTNYEGL…NNGVFLPPSP (78 aa)). The segment covering 302 to 314 (NTSDTQAQPSAAQ) has biased composition (polar residues). Disordered regions lie at residues 302–331 (NTSD…TSPT) and 346–435 (ATSY…ENPR). Positions 317–331 (VVPASVPTSPTTSPT) are enriched in low complexity. Polar residues-rich tracts occupy residues 346–357 (ATSYTPSSTTHI) and 390–401 (PRTSSSPASVND).

Belongs to the speriolin family. In terms of assembly, found in a complex with CDC20, CDC27 and TUBG1. Interacts with CDC20. As to expression, detected only in testis.

The protein resides in the cytoplasm. It is found in the cytoskeleton. The protein localises to the microtubule organizing center. It localises to the centrosome. This is Speriolin (SPATC1) from Homo sapiens (Human).